The chain runs to 267 residues: Imidazole glycerol phosphate synthase subunit HisF (267 aa).

Residues Asp21 and Asp140 contribute to the active site.

This sequence belongs to the HisA/HisF family. Heterodimer of HisH and HisF.

Its subcellular location is the cytoplasm. The enzyme catalyses 5-[(5-phospho-1-deoxy-D-ribulos-1-ylimino)methylamino]-1-(5-phospho-beta-D-ribosyl)imidazole-4-carboxamide + L-glutamine = D-erythro-1-(imidazol-4-yl)glycerol 3-phosphate + 5-amino-1-(5-phospho-beta-D-ribosyl)imidazole-4-carboxamide + L-glutamate + H(+). It functions in the pathway amino-acid biosynthesis; L-histidine biosynthesis; L-histidine from 5-phospho-alpha-D-ribose 1-diphosphate: step 5/9. IGPS catalyzes the conversion of PRFAR and glutamine to IGP, AICAR and glutamate. The HisF subunit catalyzes the cyclization activity that produces IGP and AICAR from PRFAR using the ammonia provided by the HisH subunit. This chain is Imidazole glycerol phosphate synthase subunit HisF, found in Bordetella avium (strain 197N).